The primary structure comprises 378 residues: Probable dihydroorotase-like protein (378 aa).

The protein belongs to the metallo-dependent hydrolases superfamily. DHOase family. PyrC' subfamily.

Its function is as follows. Non-functional DHOase. In Helicobacter pylori (strain ATCC 700392 / 26695) (Campylobacter pylori), this protein is Probable dihydroorotase-like protein (pyrC').